Reading from the N-terminus, the 101-residue chain is Feather keratin Cos1-1/Cos1-3/Cos2-1 (101 aa).

At S2 the chain carries N-acetylserine.

It belongs to the avian keratin family. In terms of assembly, the avian keratins (F-ker, S-ker, C-ker and B-ker) are a complex mixture of very similar polypeptides.

The sequence is that of Feather keratin Cos1-1/Cos1-3/Cos2-1 from Columba livia (Rock dove).